The primary structure comprises 460 residues: ATP synthase subunit beta (460 aa).

150–157 (GGAGVGKT) lines the ATP pocket.

The protein belongs to the ATPase alpha/beta chains family. In terms of assembly, F-type ATPases have 2 components, CF(1) - the catalytic core - and CF(0) - the membrane proton channel. CF(1) has five subunits: alpha(3), beta(3), gamma(1), delta(1), epsilon(1). CF(0) has three main subunits: a(1), b(2) and c(9-12). The alpha and beta chains form an alternating ring which encloses part of the gamma chain. CF(1) is attached to CF(0) by a central stalk formed by the gamma and epsilon chains, while a peripheral stalk is formed by the delta and b chains.

It localises to the cell inner membrane. The catalysed reaction is ATP + H2O + 4 H(+)(in) = ADP + phosphate + 5 H(+)(out). In terms of biological role, produces ATP from ADP in the presence of a proton gradient across the membrane. The catalytic sites are hosted primarily by the beta subunits. This chain is ATP synthase subunit beta, found in Yersinia enterocolitica serotype O:8 / biotype 1B (strain NCTC 13174 / 8081).